Reading from the N-terminus, the 403-residue chain is MGSLSNYSPVMEDVQAIRKAQKADGTATVMAIGTAHPPHIFPQDTYADFYFRATNSEHKVELKKKFDRICKKTMIGKRYFNYDEEFLKKYPNITSFDEPSLNDRQDICVPGVPALGAEAAVKAIAEWGRPKSEITHLVFCTSCGVDMPSADFQCAKLLGLRTNVNKYCVYMQGCYAGGTVMRYAKDLAENNRGARVLVVCAELTIIGLRGPNESHLDNAIGNSLFGDGAAALIVGSDPIIGVERPMFEIVCAKQTVIPNSEDVIHLHMREAGLMFYMSKDSPETISNNVEACLVDVFKSVGMTPPEDWNSLFWIPHPGGRAILDQVEARLKLRPEKFGATRTVLWDCGNMVSACVLYILDEMRRKSVADGLATYGEGLEWGVLLGFGPGMTVETILLHSLPPV.

Residue Cys174 is part of the active site. CoA is bound by residues Ser281 and Gly318–Ala321.

It belongs to the thiolase-like superfamily. Chalcone/stilbene synthases family. As to quaternary structure, homodimer.

It functions in the pathway secondary metabolite biosynthesis; flavonoid biosynthesis. In terms of biological role, catalyzes the iterative condensations of 8 molecules of malonyl-CoA to produce aromatic octaketides, SEK4 and SEK4b, the products of the minimal polyketide synthase for the benzoisochromanequinone actinorhodin. May be involved in the biosynthesis of the octaketide barbaloin. In Aloe arborescens (Kidachi aloe), this protein is Octaketide synthase 2 (PKS4).